Consider the following 137-residue polypeptide: Large-conductance mechanosensitive channel (137 aa).

Transmembrane regions (helical) follow at residues Val-15–Val-35 and Gly-81–Ile-101.

It belongs to the MscL family. As to quaternary structure, homopentamer.

The protein resides in the cell inner membrane. In terms of biological role, channel that opens in response to stretch forces in the membrane lipid bilayer. May participate in the regulation of osmotic pressure changes within the cell. The protein is Large-conductance mechanosensitive channel of Hyphomonas neptunium (strain ATCC 15444).